The primary structure comprises 371 residues: Anhydro-N-acetylmuramic acid kinase (371 aa).

12 to 20 (GTVLDGNID) contacts ATP.

It belongs to the anhydro-N-acetylmuramic acid kinase family.

It catalyses the reaction 1,6-anhydro-N-acetyl-beta-muramate + ATP + H2O = N-acetyl-D-muramate 6-phosphate + ADP + H(+). It participates in amino-sugar metabolism; 1,6-anhydro-N-acetylmuramate degradation. It functions in the pathway cell wall biogenesis; peptidoglycan recycling. Functionally, catalyzes the specific phosphorylation of 1,6-anhydro-N-acetylmuramic acid (anhMurNAc) with the simultaneous cleavage of the 1,6-anhydro ring, generating MurNAc-6-P. Is required for the utilization of anhMurNAc either imported from the medium or derived from its own cell wall murein, and thus plays a role in cell wall recycling. In Brucella anthropi (strain ATCC 49188 / DSM 6882 / CCUG 24695 / JCM 21032 / LMG 3331 / NBRC 15819 / NCTC 12168 / Alc 37) (Ochrobactrum anthropi), this protein is Anhydro-N-acetylmuramic acid kinase.